We begin with the raw amino-acid sequence, 142 residues long: Small ribosomal subunit protein uS12 (142 aa).

This sequence belongs to the universal ribosomal protein uS12 family. As to quaternary structure, part of the 30S ribosomal subunit.

Its function is as follows. With S4 and S5 plays an important role in translational accuracy. Located at the interface of the 30S and 50S subunits. The sequence is that of Small ribosomal subunit protein uS12 from Methanosarcina mazei (strain ATCC BAA-159 / DSM 3647 / Goe1 / Go1 / JCM 11833 / OCM 88) (Methanosarcina frisia).